The primary structure comprises 254 residues: tRNA (guanine-N(1)-)-methyltransferase (254 aa).

Residues glycine 115 and 135-140 each bind S-adenosyl-L-methionine; that span reads VGDFVL.

It belongs to the RNA methyltransferase TrmD family. Homodimer.

Its subcellular location is the cytoplasm. The catalysed reaction is guanosine(37) in tRNA + S-adenosyl-L-methionine = N(1)-methylguanosine(37) in tRNA + S-adenosyl-L-homocysteine + H(+). In terms of biological role, specifically methylates guanosine-37 in various tRNAs. The protein is tRNA (guanine-N(1)-)-methyltransferase of Francisella tularensis subsp. tularensis (strain FSC 198).